Reading from the N-terminus, the 230-residue chain is 7-cyano-7-deazaguanine synthase (230 aa).

14-24 contributes to the ATP binding site; sequence LSGGLDSTTTL. Residues C194, C204, C207, and C210 each coordinate Zn(2+).

It belongs to the QueC family. The cofactor is Zn(2+).

It catalyses the reaction 7-carboxy-7-deazaguanine + NH4(+) + ATP = 7-cyano-7-deazaguanine + ADP + phosphate + H2O + H(+). It functions in the pathway purine metabolism; 7-cyano-7-deazaguanine biosynthesis. Functionally, catalyzes the ATP-dependent conversion of 7-carboxy-7-deazaguanine (CDG) to 7-cyano-7-deazaguanine (preQ(0)). The sequence is that of 7-cyano-7-deazaguanine synthase from Ruthia magnifica subsp. Calyptogena magnifica.